The primary structure comprises 406 residues: NADH-quinone oxidoreductase subunit D (406 aa).

The protein belongs to the complex I 49 kDa subunit family. In terms of assembly, NDH-1 is composed of 14 different subunits. Subunits NuoB, C, D, E, F, and G constitute the peripheral sector of the complex.

Its subcellular location is the cell inner membrane. It catalyses the reaction a quinone + NADH + 5 H(+)(in) = a quinol + NAD(+) + 4 H(+)(out). NDH-1 shuttles electrons from NADH, via FMN and iron-sulfur (Fe-S) centers, to quinones in the respiratory chain. The immediate electron acceptor for the enzyme in this species is believed to be ubiquinone. Couples the redox reaction to proton translocation (for every two electrons transferred, four hydrogen ions are translocated across the cytoplasmic membrane), and thus conserves the redox energy in a proton gradient. This chain is NADH-quinone oxidoreductase subunit D, found in Leptospira biflexa serovar Patoc (strain Patoc 1 / Ames).